Consider the following 590-residue polypeptide: Mannosyl-oligosaccharide 1,2-alpha-mannosidase mans-2 (590 aa).

The Cytoplasmic segment spans residues 1-9 (MKTVRFNKQ). The chain crosses the membrane as a helical; Signal-anchor for type II membrane protein span at residues 10 to 30 (ALAILAACFIFLLCVVCYFSA). Over 31 to 590 (SSESHNAVVV…EAHPVPVLTN (560 aa)) the chain is Lumenal. Residues 88-102 (PARVESKPPGEKTST) are compositionally biased toward basic and acidic residues. The disordered stretch occupies residues 88–112 (PARVESKPPGEKTSTEPEETGVGKA). 4 N-linked (GlcNAc...) asparagine glycosylation sites follow: asparagine 156, asparagine 212, asparagine 373, and asparagine 402. Cysteine 423 and cysteine 456 are joined by a disulfide. Glutamate 470 (proton donor) is an active-site residue. Residue threonine 580 participates in Ca(2+) binding.

It belongs to the glycosyl hydrolase 47 family. Ca(2+) serves as cofactor.

Its subcellular location is the membrane. The catalysed reaction is N(4)-(alpha-D-Man-(1-&gt;2)-alpha-D-Man-(1-&gt;2)-alpha-D-Man-(1-&gt;3)-[alpha-D-Man-(1-&gt;2)-alpha-D-Man-(1-&gt;3)-[alpha-D-Man-(1-&gt;2)-alpha-D-Man-(1-&gt;6)]-alpha-D-Man-(1-&gt;6)]-beta-D-Man-(1-&gt;4)-beta-D-GlcNAc-(1-&gt;4)-beta-D-GlcNAc)-L-asparaginyl-[protein] (N-glucan mannose isomer 9A1,2,3B1,2,3) + 4 H2O = N(4)-(alpha-D-Man-(1-&gt;3)-[alpha-D-Man-(1-&gt;3)-[alpha-D-Man-(1-&gt;6)]-alpha-D-Man-(1-&gt;6)]-beta-D-Man-(1-&gt;4)-beta-D-GlcNAc-(1-&gt;4)-beta-D-GlcNAc)-L-asparaginyl-[protein] (N-glucan mannose isomer 5A1,2) + 4 beta-D-mannose. It catalyses the reaction N(4)-(alpha-D-Man-(1-&gt;2)-alpha-D-Man-(1-&gt;2)-alpha-D-Man-(1-&gt;3)-[alpha-D-Man-(1-&gt;3)-[alpha-D-Man-(1-&gt;2)-alpha-D-Man-(1-&gt;6)]-alpha-D-Man-(1-&gt;6)]-beta-D-Man-(1-&gt;4)-beta-D-GlcNAc-(1-&gt;4)-beta-D-GlcNAc)-L-asparaginyl-[protein] (N-glucan mannose isomer 8A1,2,3B1,3) + 3 H2O = N(4)-(alpha-D-Man-(1-&gt;3)-[alpha-D-Man-(1-&gt;3)-[alpha-D-Man-(1-&gt;6)]-alpha-D-Man-(1-&gt;6)]-beta-D-Man-(1-&gt;4)-beta-D-GlcNAc-(1-&gt;4)-beta-D-GlcNAc)-L-asparaginyl-[protein] (N-glucan mannose isomer 5A1,2) + 3 beta-D-mannose. It functions in the pathway protein modification; protein glycosylation. Involved in the maturation of Asn-linked oligosaccharides. Progressively trim alpha-1,2-linked mannose residues from Man(9)GlcNAc(2) to produce Man(5)GlcNAc(2). This chain is Mannosyl-oligosaccharide 1,2-alpha-mannosidase mans-2, found in Caenorhabditis elegans.